Reading from the N-terminus, the 545-residue chain is MSKSTKKFNSLCIDLSRDLSLEVYQSIASVATGSSDPHSDDFTAIAYLRDELLTKHPNLGDGNDEATRRSLAIAKLLEANDRCGQINRDGFLHDATASWDPDVLQTSIRSLIGNLLSGYSSQLFRHCTFSNGASMGHKLQDAAPYKKFAEQATVTPRALKAAVLVKDQCSPWIRHSHVFPESYTFRLVGGNGVFTVPKNNKIDRAACKEPDMNMYLQKGVGGFIRRRLKTVGIDLNDQTINQRLAQQGSRDGSLATIDLSSASDSISDRLVWSFLPPELYSYLDMIRSHYGYVNGKMIRWELFSTMGNGFTFELESMIFWAIVRATQIHFRNTGTIGIYGDDIICPTEIAPRVLEALSFYGFKPNLRKTFTSGSFRESCGAHYFRGVDVKPFYIKKPITDLFSLMLILNRIRGWGVVNGIADPRLYEVWEKLSRLVPRYLFGGTDLQADYYVVSPPILKGIYSKMNGRREYAEARTTGFKLARIARWRKHFSDKHDSGRYIAWFHTGGEITDSMKSAGVRVMRTSEWLQPVPVFPQECGPASSPQ.

The RdRp catalytic domain occupies 243-373; it reads RLAQQGSRDG…PNLRKTFTSG (131 aa).

Part of the viral RNA-dependent RNA polymerase complex, the other subunits are probably the host ribosomal protein S1, EF-Tu and EF-Ts.

The catalysed reaction is RNA(n) + a ribonucleoside 5'-triphosphate = RNA(n+1) + diphosphate. Functionally, this is the catalytic subunit of the viral RNA-dependent RNA polymerase complex. This complex is involved in viral RNA replication that produces (+)-stranded genomes via a complementary, (-)-stranded intermediate. The polypeptide is RNA-directed RNA polymerase beta chain (Enterobacteria phage fr (Bacteriophage fr)).